A 39-amino-acid polypeptide reads, in one-letter code: Photosystem II reaction center protein Y (39 aa).

Residues 5–23 (VLIVLTPLLIAGGWAVFNI) form a helical membrane-spanning segment.

The protein belongs to the PsbY family. As to quaternary structure, PSII is composed of 1 copy each of membrane proteins PsbA, PsbB, PsbC, PsbD, PsbE, PsbF, PsbH, PsbI, PsbJ, PsbK, PsbL, PsbM, PsbT, PsbX, PsbY, PsbZ, Psb30/Ycf12, peripheral proteins PsbO, CyanoQ (PsbQ), PsbU, PsbV and a large number of cofactors. It forms dimeric complexes.

The protein resides in the cellular thylakoid membrane. Loosely associated component of the core of photosystem II (PSII), it is not always seen in crystals. PSII is a light-driven water plastoquinone oxidoreductase, using light energy to abstract electrons from H(2)O, generating a proton gradient subsequently used for ATP formation. This is Photosystem II reaction center protein Y from Microcystis aeruginosa (strain NIES-843 / IAM M-2473).